Reading from the N-terminus, the 372-residue chain is Queuine tRNA-ribosyltransferase (372 aa).

The Proton acceptor role is filled by Asp-90. Substrate contacts are provided by residues 90-94 (DSGGF), Asp-144, Gln-193, and Gly-220. Residues 251 to 257 (GVGTPED) are RNA binding. The active-site Nucleophile is Asp-270. Residues 275-279 (TRNAR) form an RNA binding; important for wobble base 34 recognition region. Zn(2+) is bound by residues Cys-308, Cys-310, Cys-313, and His-339.

Belongs to the queuine tRNA-ribosyltransferase family. Homodimer. Within each dimer, one monomer is responsible for RNA recognition and catalysis, while the other monomer binds to the replacement base PreQ1. Zn(2+) serves as cofactor.

The catalysed reaction is 7-aminomethyl-7-carbaguanine + guanosine(34) in tRNA = 7-aminomethyl-7-carbaguanosine(34) in tRNA + guanine. The protein operates within tRNA modification; tRNA-queuosine biosynthesis. Catalyzes the base-exchange of a guanine (G) residue with the queuine precursor 7-aminomethyl-7-deazaguanine (PreQ1) at position 34 (anticodon wobble position) in tRNAs with GU(N) anticodons (tRNA-Asp, -Asn, -His and -Tyr). Catalysis occurs through a double-displacement mechanism. The nucleophile active site attacks the C1' of nucleotide 34 to detach the guanine base from the RNA, forming a covalent enzyme-RNA intermediate. The proton acceptor active site deprotonates the incoming PreQ1, allowing a nucleophilic attack on the C1' of the ribose to form the product. After dissociation, two additional enzymatic reactions on the tRNA convert PreQ1 to queuine (Q), resulting in the hypermodified nucleoside queuosine (7-(((4,5-cis-dihydroxy-2-cyclopenten-1-yl)amino)methyl)-7-deazaguanosine). The protein is Queuine tRNA-ribosyltransferase of Campylobacter hominis (strain ATCC BAA-381 / DSM 21671 / CCUG 45161 / LMG 19568 / NCTC 13146 / CH001A).